The chain runs to 269 residues: Flagellar brake protein YcgR (269 aa).

Residues 1–42 (MLREPMNQHDAPGPAETGADSDAETDAETDAETDAGAADDRY) are disordered. A compositionally biased stretch (acidic residues) spans 19–33 (ADSDAETDAETDAET). The PilZ domain maps to 149-261 (QRRRHFRART…MENFLQRLVF (113 aa)).

The protein belongs to the YcgR family. Monomer. Interacts with the flagellar basal bodies.

It localises to the bacterial flagellum basal body. In terms of biological role, acts as a flagellar brake, regulating swimming and swarming in a bis-(3'-5') cyclic diguanylic acid (c-di-GMP)-dependent manner. Binds 1 c-di-GMP dimer per subunit. Increasing levels of c-di-GMP lead to decreased motility. The sequence is that of Flagellar brake protein YcgR from Cupriavidus taiwanensis (strain DSM 17343 / BCRC 17206 / CCUG 44338 / CIP 107171 / LMG 19424 / R1) (Ralstonia taiwanensis (strain LMG 19424)).